The following is a 141-amino-acid chain: Large ribosomal subunit protein uL11 (141 aa).

This sequence belongs to the universal ribosomal protein uL11 family. In terms of assembly, part of the ribosomal stalk of the 50S ribosomal subunit. Interacts with L10 and the large rRNA to form the base of the stalk. L10 forms an elongated spine to which L12 dimers bind in a sequential fashion forming a multimeric L10(L12)X complex. In terms of processing, one or more lysine residues are methylated.

In terms of biological role, forms part of the ribosomal stalk which helps the ribosome interact with GTP-bound translation factors. This Lacticaseibacillus casei (strain BL23) (Lactobacillus casei) protein is Large ribosomal subunit protein uL11.